Reading from the N-terminus, the 173-residue chain is Photosystem I assembly protein Ycf3 (173 aa).

TPR repeat units follow at residues 35–68 (AYIY…EENK), 72–105 (GETL…NPKQ), and 120–153 (GRYA…YPGG).

Belongs to the Ycf3 family.

The protein localises to the cellular thylakoid membrane. Its function is as follows. Essential for the assembly of the photosystem I (PSI) complex. May act as a chaperone-like factor to guide the assembly of the PSI subunits. This chain is Photosystem I assembly protein Ycf3, found in Prochlorococcus marinus (strain MIT 9215).